We begin with the raw amino-acid sequence, 274 residues long: MSLQNDIITALGVKSSIDPAQEIRVSVDFLKNYLNAHPFITSLVLGISGGQDSTLTGKLCQTAITELRNETGTSRYQFIAVRLPYGVQADEADCQDAIAFIQPDRVLTVNIKPAIESSEATLRAIGVELSDFVKGNEKARERMKAQYSIAGMNAGLVVGTDHAAEAVTGFFTKYGDGGTDINPIFRLNKRQGKALLRELGCPSHLYTKAPTADLEEDRPSLPDEVALGVTYEKIDDYLEGKPIDANDAATIENWYRKTEHKRRPPITVFDDFWQ.

Residue Gly46 to Ser53 coordinates ATP. Residue Asp52 coordinates Mg(2+). Arg140 provides a ligand contact to deamido-NAD(+). Thr160 is an ATP binding site. Glu165 lines the Mg(2+) pocket. The deamido-NAD(+) site is built by Lys173 and Asp180. Positions 189 and 211 each coordinate ATP. Position 260–261 (His260–Lys261) interacts with deamido-NAD(+).

It belongs to the NAD synthetase family. Homodimer.

The catalysed reaction is deamido-NAD(+) + NH4(+) + ATP = AMP + diphosphate + NAD(+) + H(+). It functions in the pathway cofactor biosynthesis; NAD(+) biosynthesis; NAD(+) from deamido-NAD(+) (ammonia route): step 1/1. Functionally, catalyzes the ATP-dependent amidation of deamido-NAD to form NAD. Uses ammonia as a nitrogen source. The sequence is that of NH(3)-dependent NAD(+) synthetase from Pectobacterium atrosepticum (strain SCRI 1043 / ATCC BAA-672) (Erwinia carotovora subsp. atroseptica).